Reading from the N-terminus, the 527-residue chain is T-complex protein 1 subunit beta (527 aa).

Serine 2 is subject to N-acetylserine.

This sequence belongs to the TCP-1 chaperonin family. As to quaternary structure, heterooligomeric complex of about 850 to 900 kDa that forms two stacked rings, 12 to 16 nm in diameter. Interacts with PLP2; this interaction leads to inhibition of CCT complex mediated actin folding.

Its subcellular location is the cytoplasm. Its function is as follows. Molecular chaperone; assists the folding of proteins upon ATP hydrolysis. Known to play a role, in vitro, in the folding of actin and tubulin. In yeast may play a role in mitotic spindle formation. The polypeptide is T-complex protein 1 subunit beta (CCT2) (Saccharomyces cerevisiae (strain ATCC 204508 / S288c) (Baker's yeast)).